Consider the following 374-residue polypeptide: Biotin synthase (374 aa).

A Radical SAM core domain is found at 49–276 (NEVQVSTLLS…KSHVRLSAGR (228 aa)). 3 residues coordinate [4Fe-4S] cluster: C64, C68, and C71. C108, C139, C199, and R271 together coordinate [2Fe-2S] cluster. The segment at 344–374 (QQQEQAEGSNDLFIDATKPKVAAKQQHATEA) is disordered.

It belongs to the radical SAM superfamily. Biotin synthase family. As to quaternary structure, homodimer. [4Fe-4S] cluster is required as a cofactor. It depends on [2Fe-2S] cluster as a cofactor.

It carries out the reaction (4R,5S)-dethiobiotin + (sulfur carrier)-SH + 2 reduced [2Fe-2S]-[ferredoxin] + 2 S-adenosyl-L-methionine = (sulfur carrier)-H + biotin + 2 5'-deoxyadenosine + 2 L-methionine + 2 oxidized [2Fe-2S]-[ferredoxin]. Its pathway is cofactor biosynthesis; biotin biosynthesis; biotin from 7,8-diaminononanoate: step 2/2. Catalyzes the conversion of dethiobiotin (DTB) to biotin by the insertion of a sulfur atom into dethiobiotin via a radical-based mechanism. The protein is Biotin synthase of Alteromonas mediterranea (strain DSM 17117 / CIP 110805 / LMG 28347 / Deep ecotype).